Consider the following 139-residue polypeptide: Prefoldin subunit alpha (139 aa).

The protein belongs to the prefoldin subunit alpha family. Heterohexamer of two alpha and four beta subunits.

Its subcellular location is the cytoplasm. Its function is as follows. Molecular chaperone capable of stabilizing a range of proteins. Seems to fulfill an ATP-independent, HSP70-like function in archaeal de novo protein folding. The protein is Prefoldin subunit alpha of Picrophilus torridus (strain ATCC 700027 / DSM 9790 / JCM 10055 / NBRC 100828 / KAW 2/3).